A 354-amino-acid chain; its full sequence is NADH-quinone oxidoreductase subunit H (354 aa).

Transmembrane regions (helical) follow at residues 25 to 45 (LVRI…LILW), 91 to 111 (WIYM…WAVI), 126 to 146 (LLYA…AGWA), 170 to 190 (MGFA…SGIV), 205 to 225 (FLSW…ISGI), 267 to 287 (IVIS…PFGF), 290 to 310 (FIPG…VFIW), and 330 to 350 (IFIP…MSPL).

This sequence belongs to the complex I subunit 1 family. NDH-1 is composed of 14 different subunits. Subunits NuoA, H, J, K, L, M, N constitute the membrane sector of the complex.

Its subcellular location is the cell inner membrane. The catalysed reaction is a quinone + NADH + 5 H(+)(in) = a quinol + NAD(+) + 4 H(+)(out). NDH-1 shuttles electrons from NADH, via FMN and iron-sulfur (Fe-S) centers, to quinones in the respiratory chain. The immediate electron acceptor for the enzyme in this species is believed to be ubiquinone. Couples the redox reaction to proton translocation (for every two electrons transferred, four hydrogen ions are translocated across the cytoplasmic membrane), and thus conserves the redox energy in a proton gradient. This subunit may bind ubiquinone. This is NADH-quinone oxidoreductase subunit H from Paraburkholderia xenovorans (strain LB400).